Here is a 399-residue protein sequence, read N- to C-terminus: Leu/Ile/Val-binding protein homolog 7 (399 aa).

A signal peptide spans 1–22 (MEKHLIALSVAALQAGAAPASA).

It belongs to the leucine-binding protein family.

Its function is as follows. Component of an amino-acid transport system. The protein is Leu/Ile/Val-binding protein homolog 7 of Brucella abortus (strain 2308).